The chain runs to 434 residues: Gamma-glutamyl phosphate reductase (434 aa).

This sequence belongs to the gamma-glutamyl phosphate reductase family.

Its subcellular location is the cytoplasm. It carries out the reaction L-glutamate 5-semialdehyde + phosphate + NADP(+) = L-glutamyl 5-phosphate + NADPH + H(+). The protein operates within amino-acid biosynthesis; L-proline biosynthesis; L-glutamate 5-semialdehyde from L-glutamate: step 2/2. Catalyzes the NADPH-dependent reduction of L-glutamate 5-phosphate into L-glutamate 5-semialdehyde and phosphate. The product spontaneously undergoes cyclization to form 1-pyrroline-5-carboxylate. This is Gamma-glutamyl phosphate reductase from Pelotomaculum thermopropionicum (strain DSM 13744 / JCM 10971 / SI).